A 274-amino-acid polypeptide reads, in one-letter code: MTGLMVTDITNIAKEYNLTAFSEDVYPCNKNYELTNGQLSALKTINVVLTTRSDNYEKDVTYNDDDDHDRCIVSEIGSHHSFNDEKDNYIQSNNIQQTPSLSAVFDDNKRVHLLEQEIAELRKKKTKSKNLLDFTNTLFNKNPLRIGILNKRAIILNYASMNNSPLTMEDLEACEDEEIENMYISIKQYHEVHKKKLIVTNIISILISVIEQLLVRIGFDEIKGLSKEVTSTIIDLEIGEDCEQLATKMGVANNPVINISLFILKIFIRRINIL.

The stretch at 106 to 136 (DDNKRVHLLEQEIAELRKKKTKSKNLLDFTN) forms a coiled coil.

Belongs to the poxviridae A11 family. Homomultimer. Interacts with A32. Phosphorylated by a F10-independent mechanism.

Its subcellular location is the host cytoplasm. Its function is as follows. Required for viral crescent formation early during virus morphogenesis. The protein is Protein A11 homolog of Fowlpox virus (strain NVSL) (FPV).